A 101-amino-acid chain; its full sequence is Small ribosomal subunit protein uS14 (101 aa).

It belongs to the universal ribosomal protein uS14 family. In terms of assembly, part of the 30S ribosomal subunit. Contacts proteins S3 and S10.

In terms of biological role, binds 16S rRNA, required for the assembly of 30S particles and may also be responsible for determining the conformation of the 16S rRNA at the A site. This is Small ribosomal subunit protein uS14 from Chlamydia pneumoniae (Chlamydophila pneumoniae).